The following is a 362-amino-acid chain: Zinc phosphodiesterase ELAC protein 1 (362 aa).

7 residues coordinate Zn(2+): His-62, His-64, Asp-66, His-67, His-181, Asp-252, and His-312. The active-site Proton acceptor is Asp-66.

It belongs to the RNase Z family. Homodimer. Zn(2+) serves as cofactor.

It is found in the cytoplasm. The protein localises to the cytosol. Its subcellular location is the nucleus. It carries out the reaction Endonucleolytic cleavage of RNA, removing extra 3' nucleotides from tRNA precursor, generating 3' termini of tRNAs. A 3'-hydroxy group is left at the tRNA terminus and a 5'-phosphoryl group is left at the trailer molecule.. Its function is as follows. Zinc phosphodiesterase, which displays some tRNA 3'-processing endonuclease activity. Specifically involved in tRNA repair: acts downstream of the ribosome-associated quality control (RQC) pathway by removing a 2',3'-cyclic phosphate from tRNAs following cleavage by ANKZF1. tRNAs are then processed by TRNT1. The sequence is that of Zinc phosphodiesterase ELAC protein 1 (Elac1) from Mus musculus (Mouse).